A 353-amino-acid chain; its full sequence is Photosystem II D2 protein (353 aa).

An N-acetylthreonine modification is found at Thr-2. At Thr-2 the chain carries Phosphothreonine. A helical membrane pass occupies residues 41 to 61; that stretch reads CAYFALGGWLTGTTFVTSWYT. His-118 provides a ligand contact to chlorophyll a. A helical membrane pass occupies residues 125–141; sequence GFMLRQFEIARSVGLRP. Gln-130 and Asn-143 together coordinate pheophytin a. A helical transmembrane segment spans residues 153-166; that stretch reads VFVSVFLIYPLGQS. His-198 contributes to the chlorophyll a binding site. The helical transmembrane segment at 208–228 threads the bilayer; sequence AALLCAIHGATVENTIFEDGD. Residues His-215 and Phe-262 each coordinate a plastoquinone. His-215 provides a ligand contact to Fe cation. His-269 is a binding site for Fe cation. The helical transmembrane segment at 279–295 threads the bilayer; that stretch reads GLWMSAIGVVGLALNLR.

This sequence belongs to the reaction center PufL/M/PsbA/D family. As to quaternary structure, PSII is composed of 1 copy each of membrane proteins PsbA, PsbB, PsbC, PsbD, PsbE, PsbF, PsbH, PsbI, PsbJ, PsbK, PsbL, PsbM, PsbT, PsbX, PsbY, PsbZ, Psb30/Ycf12, at least 3 peripheral proteins of the oxygen-evolving complex and a large number of cofactors. It forms dimeric complexes. It depends on The D1/D2 heterodimer binds P680, chlorophylls that are the primary electron donor of PSII, and subsequent electron acceptors. It shares a non-heme iron and each subunit binds pheophytin, quinone, additional chlorophylls, carotenoids and lipids. There is also a Cl(-1) ion associated with D1 and D2, which is required for oxygen evolution. The PSII complex binds additional chlorophylls, carotenoids and specific lipids. as a cofactor.

Its subcellular location is the plastid. The protein localises to the chloroplast thylakoid membrane. It carries out the reaction 2 a plastoquinone + 4 hnu + 2 H2O = 2 a plastoquinol + O2. Its function is as follows. Photosystem II (PSII) is a light-driven water:plastoquinone oxidoreductase that uses light energy to abstract electrons from H(2)O, generating O(2) and a proton gradient subsequently used for ATP formation. It consists of a core antenna complex that captures photons, and an electron transfer chain that converts photonic excitation into a charge separation. The D1/D2 (PsbA/PsbD) reaction center heterodimer binds P680, the primary electron donor of PSII as well as several subsequent electron acceptors. D2 is needed for assembly of a stable PSII complex. The sequence is that of Photosystem II D2 protein from Staurastrum punctulatum (Green alga).